We begin with the raw amino-acid sequence, 171 residues long: Adenine phosphoribosyltransferase (171 aa).

This sequence belongs to the purine/pyrimidine phosphoribosyltransferase family. In terms of assembly, homodimer.

Its subcellular location is the cytoplasm. The catalysed reaction is AMP + diphosphate = 5-phospho-alpha-D-ribose 1-diphosphate + adenine. Its pathway is purine metabolism; AMP biosynthesis via salvage pathway; AMP from adenine: step 1/1. Functionally, catalyzes a salvage reaction resulting in the formation of AMP, that is energically less costly than de novo synthesis. The protein is Adenine phosphoribosyltransferase of Acidiphilium cryptum (strain JF-5).